The following is a 424-amino-acid chain: Serine--tRNA ligase (424 aa).

230–232 (TAE) contacts L-serine. 261 to 263 (RSE) is an ATP binding site. Glutamate 284 is an L-serine binding site. 348-351 (EISS) provides a ligand contact to ATP. Serine 384 provides a ligand contact to L-serine.

The protein belongs to the class-II aminoacyl-tRNA synthetase family. Type-1 seryl-tRNA synthetase subfamily. In terms of assembly, homodimer. The tRNA molecule binds across the dimer.

It is found in the cytoplasm. The enzyme catalyses tRNA(Ser) + L-serine + ATP = L-seryl-tRNA(Ser) + AMP + diphosphate + H(+). The catalysed reaction is tRNA(Sec) + L-serine + ATP = L-seryl-tRNA(Sec) + AMP + diphosphate + H(+). It functions in the pathway aminoacyl-tRNA biosynthesis; selenocysteinyl-tRNA(Sec) biosynthesis; L-seryl-tRNA(Sec) from L-serine and tRNA(Sec): step 1/1. Its function is as follows. Catalyzes the attachment of serine to tRNA(Ser). Is also able to aminoacylate tRNA(Sec) with serine, to form the misacylated tRNA L-seryl-tRNA(Sec), which will be further converted into selenocysteinyl-tRNA(Sec). This Streptococcus pneumoniae (strain 70585) protein is Serine--tRNA ligase.